The primary structure comprises 325 residues: GMP reductase (325 aa).

Cys173 serves as the catalytic Thioimidate intermediate. 202 to 225 (IIADGGIRSHGDIAKSVRFGATMV) provides a ligand contact to NADP(+).

The protein belongs to the IMPDH/GMPR family. GuaC type 2 subfamily.

The enzyme catalyses IMP + NH4(+) + NADP(+) = GMP + NADPH + 2 H(+). Functionally, catalyzes the irreversible NADPH-dependent deamination of GMP to IMP. It functions in the conversion of nucleobase, nucleoside and nucleotide derivatives of G to A nucleotides, and in maintaining the intracellular balance of A and G nucleotides. The polypeptide is GMP reductase (Acidovorax sp. (strain JS42)).